We begin with the raw amino-acid sequence, 328 residues long: GMP reductase (328 aa).

The Thioimidate intermediate role is filled by C176. 205-228 (IIADGGIRTHGDIAKSIRFGASMI) contributes to the NADP(+) binding site.

It belongs to the IMPDH/GMPR family. GuaC type 2 subfamily.

It catalyses the reaction IMP + NH4(+) + NADP(+) = GMP + NADPH + 2 H(+). Its function is as follows. Catalyzes the irreversible NADPH-dependent deamination of GMP to IMP. It functions in the conversion of nucleobase, nucleoside and nucleotide derivatives of G to A nucleotides, and in maintaining the intracellular balance of A and G nucleotides. The polypeptide is GMP reductase (Streptococcus pneumoniae (strain Taiwan19F-14)).